A 57-amino-acid polypeptide reads, in one-letter code: UPF0391 membrane protein RB0084 (57 aa).

Transmembrane regions (helical) follow at residues 4–24 and 33–53; these read WALI…SGVS and ILFY…LAVG.

The protein belongs to the UPF0391 family.

It is found in the cell membrane. The polypeptide is UPF0391 membrane protein RB0084 (Rhizobium meliloti (strain 1021) (Ensifer meliloti)).